The primary structure comprises 213 residues: Probable aspartate aminotransferase (213 aa).

Residues glycine 47, tryptophan 133, and asparagine 183 each coordinate L-aspartate.

The protein belongs to the class-I pyridoxal-phosphate-dependent aminotransferase family. As to quaternary structure, homodimer. Pyridoxal 5'-phosphate is required as a cofactor.

Its subcellular location is the cytoplasm. The catalysed reaction is L-aspartate + 2-oxoglutarate = oxaloacetate + L-glutamate. This chain is Probable aspartate aminotransferase (aspC), found in Streptomyces griseus.